A 309-amino-acid polypeptide reads, in one-letter code: Probable pyridoxal 5'-phosphate synthase subunit PDX1 (309 aa).

D40 serves as a coordination point for D-ribose 5-phosphate. K97 functions as the Schiff-base intermediate with D-ribose 5-phosphate in the catalytic mechanism. Position 169 (G169) interacts with D-ribose 5-phosphate. R181 contributes to the D-glyceraldehyde 3-phosphate binding site. D-ribose 5-phosphate contacts are provided by residues G230 and 251–252 (GS).

This sequence belongs to the PdxS/SNZ family.

The enzyme catalyses aldehydo-D-ribose 5-phosphate + D-glyceraldehyde 3-phosphate + L-glutamine = pyridoxal 5'-phosphate + L-glutamate + phosphate + 3 H2O + H(+). It functions in the pathway cofactor biosynthesis; pyridoxal 5'-phosphate biosynthesis. Catalyzes the formation of pyridoxal 5'-phosphate from ribose 5-phosphate (RBP), glyceraldehyde 3-phosphate (G3P) and ammonia. The ammonia is provided by PDX2. Can also use ribulose 5-phosphate and dihydroxyacetone phosphate as substrates, resulting from enzyme-catalyzed isomerization of RBP and G3P, respectively. Also plays an indirect role in resistance to singlet oxygen-generating photosensitizers. This chain is Probable pyridoxal 5'-phosphate synthase subunit PDX1 (PDX1), found in Ginkgo biloba (Ginkgo).